The primary structure comprises 725 residues: MGSNAKGRTVMEVGTDGVAIITIINPPVNSLSFDVLFSLRDSYEQALRRDDVKAIVVTGAKGKFSGGFDITAFGVLQGGKGEQPNVRNISIEMITDIFEAARKPAVAAIDGLALGGGLEVAMACHARISTPTAQLGLPELQLGIIPGFGGTQRLPRLVGLSKALEMMLTSKPIKGQEAHSLGLVDAIVPPEELINTARRWALEILERRRPWVHSLHRTDKLESLAEARKIFNLARAQAKKQYPNLKHTIACIDAVETGVVSGPRAGLWKEAEEFQGLLHSDTCKSLIHIFFAQRSTTKVPGVTDLGLVPRQIKKVAIVGGGLMGSGIATALILSNYHVVLKEVNDKFLQAGIDRVRANLQSRVKKGNMTNEKFEKSISLLKGVLNYESFKDVDMVIEAVIENVSLKQQIFSDLEKYCPPHCMLATNTSTIDLELIGERIKSRDRIIGAHFFSPAHIMPLLEIVRTKHTAAQVIVDLLDVGKNIKKTPVVVGNCTGFAVNRMFFPYSQAAILLAEHGVDPYQIDRAISKFGMPMGPFRLCDLVGFGVAAATASQFVQAFPERTYKSMLIPLMQEDKNAGESTRKGFYVYDKNRKAGPNPELKKYIEKARNSSGVSVDPKLTKLPEKDIVEMIFFPVVNEACRVLAEGIAVKAADLDIAGVMGMGFPSYRGGLMFWADSLGSNYIYSRLEEWSKQYGGFFKPCGYLAERAVQGATLSAPGGHAKPRM.

It in the N-terminal section; belongs to the enoyl-CoA hydratase/isomerase family. This sequence in the central section; belongs to the 3-hydroxyacyl-CoA dehydrogenase family.

It is found in the glyoxysome. It catalyses the reaction a (3S)-3-hydroxyacyl-CoA = a (2E)-enoyl-CoA + H2O. The catalysed reaction is a 4-saturated-(3S)-3-hydroxyacyl-CoA = a (3E)-enoyl-CoA + H2O. It carries out the reaction a (3Z)-enoyl-CoA = a 4-saturated (2E)-enoyl-CoA. The enzyme catalyses a (3E)-enoyl-CoA = a 4-saturated (2E)-enoyl-CoA. It catalyses the reaction (3S)-3-hydroxybutanoyl-CoA = (3R)-3-hydroxybutanoyl-CoA. The catalysed reaction is a (3S)-3-hydroxyacyl-CoA + NAD(+) = a 3-oxoacyl-CoA + NADH + H(+). The protein operates within lipid metabolism; fatty acid beta-oxidation. The chain is Glyoxysomal fatty acid beta-oxidation multifunctional protein MFP-a from Cucumis sativus (Cucumber).